A 112-amino-acid chain; its full sequence is Ribonuclease P protein component (112 aa).

Belongs to the RnpA family. As to quaternary structure, consists of a catalytic RNA component (M1 or rnpB) and a protein subunit.

The catalysed reaction is Endonucleolytic cleavage of RNA, removing 5'-extranucleotides from tRNA precursor.. RNaseP catalyzes the removal of the 5'-leader sequence from pre-tRNA to produce the mature 5'-terminus. It can also cleave other RNA substrates such as 4.5S RNA. The protein component plays an auxiliary but essential role in vivo by binding to the 5'-leader sequence and broadening the substrate specificity of the ribozyme. The sequence is that of Ribonuclease P protein component from Clostridium kluyveri (strain ATCC 8527 / DSM 555 / NBRC 12016 / NCIMB 10680 / K1).